The chain runs to 327 residues: Cyclic AMP-responsive element-binding protein 1 (327 aa).

2 disordered regions span residues M1–V27 and S94–I113. The KID domain occupies Q87–T146. A Phosphoserine; by CaMK1, CaMK2, CaMK4, PKB/AKT1 or PKB/AKT2, RPS6KA3, RPS6KA4, RPS6KA5 and SGK1 modification is found at S119. A Glycyl lysine isopeptide (Lys-Gly) (interchain with G-Cter in SUMO2) cross-link involves residue K122. Positions D126–I151 are disordered. Phosphoserine; by CaMK2 is present on S128. The residue at position 257 (S257) is a Phosphoserine; by HIPK2. The bZIP domain occupies A269–D327. Residues R270–K295 are basic motif. Residues K271 and K290 each participate in a glycyl lysine isopeptide (Lys-Gly) (interchain with G-Cter in SUMO1) cross-link. A leucine-zipper region spans residues L297–L318.

This sequence belongs to the bZIP family. In terms of assembly, interacts with PPRC1. Binds DNA as a dimer. This dimer is stabilized by magnesium ions. Interacts, through the bZIP domain, with the coactivators CRTC1/TORC1, CRTC2/TORC2 and CRTC3/TORC3. Interacts (phosphorylated form) with TOX3. When phosphorylated on Ser-119, binds CREBBP. Interacts with ARRB1. Binds to HIPK2. Interacts with SGK1. Interacts with CREBL2; regulates CREB1 phosphorylation, stability and transcriptional activity. Interacts with TSSK4; this interaction facilitates phosphorylation on Ser-119. Forms a complex with KMT2A and CREBBP. Interacts with TOX4; CREB1 is required for full induction of TOX4-dependent activity and the interaction is increased by cAMP and inhibited by insulin. In terms of processing, phosphorylation of Ser-119 allows CREBBP binding. Stimulated by phosphorylation. Phosphorylated Ser-128 can be detected in the suprachiasmatic nucleus (SCN), the amygdala, the cortex, and the hippocampus but not in the striatum nor in the cerebellum. In the SCN, phosphorylation of Ser-128 and Ser-119 are stimulated by light exposure and submitted to circadian oscillations. In the retina, only phosphorylation of Ser-119 can be detected upon light exposure. Phosphorylation of both Ser-119 and Ser-128 in the SCN regulates the activity of CREB and participates in circadian rhythm generation. Phosphorylated upon calcium influx by CaMK4 and CaMK2 on Ser-119. CaMK4 is much more potent than CAMK2 in activating CREB. Phosphorylated by CaMK2 on Ser-128. Phosphorylation of Ser-128 blocks CREB-mediated transcription even when Ser-119 is phosphorylated. Phosphorylated by CaMK1. Phosphorylation of Ser-271 by HIPK2 in response to genotoxic stress promotes CREB1 activity, facilitating the recruitment of the coactivator CBP. Phosphorylated at Ser-119 by RPS6KA3, RPS6KA4 and RPS6KA5 in response to mitogenic or stress stimuli. CREBL2 positively regulates phosphorylation at Ser-119 thereby stimulating CREB1 transcriptional activity. In liver, phosphorylation is induced by fasting or glucagon in a circadian fashion. Phosphorylated by TSSK4 on Ser-119. Post-translationally, sumoylated with SUMO1. Sumoylation on Lys-290, but not on Lys-271, is required for nuclear localization of this protein. Sumoylation is enhanced under hypoxia, promoting nuclear localization and stabilization. Expressed in the heart (at protein level).

The protein localises to the nucleus. Functionally, phosphorylation-dependent transcription factor that stimulates transcription upon binding to the DNA cAMP response element (CRE), a sequence present in many viral and cellular promoters. Transcription activation is enhanced by the TORC coactivators which act independently of Ser-119 phosphorylation. Involved in different cellular processes including the synchronization of circadian rhythmicity and the differentiation of adipose cells. Regulates the expression of apoptotic and inflammatory response factors in cardiomyocytes in response to ERFE-mediated activation of AKT signaling. This chain is Cyclic AMP-responsive element-binding protein 1 (Creb1), found in Mus musculus (Mouse).